Consider the following 241-residue polypeptide: 1-(5-phosphoribosyl)-5-[(5-phosphoribosylamino)methylideneamino] imidazole-4-carboxamide isomerase (241 aa).

Catalysis depends on aspartate 8, which acts as the Proton acceptor. Catalysis depends on aspartate 127, which acts as the Proton donor.

It belongs to the HisA/HisF family.

It is found in the cytoplasm. The enzyme catalyses 1-(5-phospho-beta-D-ribosyl)-5-[(5-phospho-beta-D-ribosylamino)methylideneamino]imidazole-4-carboxamide = 5-[(5-phospho-1-deoxy-D-ribulos-1-ylimino)methylamino]-1-(5-phospho-beta-D-ribosyl)imidazole-4-carboxamide. It functions in the pathway amino-acid biosynthesis; L-histidine biosynthesis; L-histidine from 5-phospho-alpha-D-ribose 1-diphosphate: step 4/9. This Thermotoga petrophila (strain ATCC BAA-488 / DSM 13995 / JCM 10881 / RKU-1) protein is 1-(5-phosphoribosyl)-5-[(5-phosphoribosylamino)methylideneamino] imidazole-4-carboxamide isomerase.